A 257-amino-acid polypeptide reads, in one-letter code: uncharacterized protein (257 aa).

The chain crosses the membrane as a helical span at residues 6 to 26 (IFWLNLAAIIIISIVVSGGMF).

This sequence belongs to the staphylococcal tandem lipoprotein family.

Its subcellular location is the cell membrane. This is an uncharacterized protein from Staphylococcus aureus (strain N315).